The following is a 309-amino-acid chain: Putative taste receptor type 2 member 33 (309 aa).

Residue methionine 1 is a topological domain, extracellular. The chain crosses the membrane as a helical span at residues 2–22 (VYFLPIIFSILVVFAFVLGNF). Residues 23-46 (SNGFIALVNVIDWVKRQKISSADQ) are Cytoplasmic-facing. Residues 47–67 (ILTALVVSRVGLLWVILLHWY) traverse the membrane as a helical segment. Over 68–86 (ANVFNSALYSLEVRIVASN) the chain is Extracellular. Residue asparagine 86 is glycosylated (N-linked (GlcNAc...) asparagine). A helical transmembrane segment spans residues 87-107 (ISAVINHFSIWLAASLSIFYL). Residues 108-127 (LKIANFSNLIFLHLKKRIKS) are Cytoplasmic-facing. The helical transmembrane segment at 128 to 148 (VVLVILLGPLVFLICNLAVIT) threads the bilayer. At 149-181 (MDERVWTKEYEGNVTWKIKLRNAIHLSSLTVTT) the chain is on the extracellular side. Asparagine 161 is a glycosylation site (N-linked (GlcNAc...) asparagine). The chain crosses the membrane as a helical span at residues 182–202 (LANLIPFTLSLICFLLLICSL). Over 203–229 (CKHLKKMQLHSKGSQDPSTKVHIKALQ) the chain is Cytoplasmic. A helical transmembrane segment spans residues 230–250 (TVISFLMLCAIYFLSIMISVW). At 251-259 (NLRSLENKP) the chain is on the extracellular side. A helical membrane pass occupies residues 260-280 (VFMFCKAIRFSYPSIHPFILI). Topologically, residues 281 to 309 (WGNKKLKQTFLSVFWQVRYWVKGEKPSSP) are cytoplasmic.

This sequence belongs to the G-protein coupled receptor T2R family.

It localises to the membrane. Putative taste receptor which may play a role in the perception of bitterness. The chain is Putative taste receptor type 2 member 33 from Homo sapiens (Human).